The following is a 256-amino-acid chain: tRNA (guanine-N(1)-)-methyltransferase (256 aa).

S-adenosyl-L-methionine contacts are provided by residues G117 and 137–142 (LGDFVL).

Belongs to the RNA methyltransferase TrmD family. Homodimer.

The protein resides in the cytoplasm. The catalysed reaction is guanosine(37) in tRNA + S-adenosyl-L-methionine = N(1)-methylguanosine(37) in tRNA + S-adenosyl-L-homocysteine + H(+). In terms of biological role, specifically methylates guanosine-37 in various tRNAs. The sequence is that of tRNA (guanine-N(1)-)-methyltransferase from Methylibium petroleiphilum (strain ATCC BAA-1232 / LMG 22953 / PM1).